Consider the following 346-residue polypeptide: tRNA-specific 2-thiouridylase MnmA (346 aa).

6–13 (AMSGGTDS) contacts ATP. Cysteine 90 functions as the Nucleophile in the catalytic mechanism. Cysteine 90 and cysteine 187 form a disulfide bridge. Glycine 114 is an ATP binding site. The interval 137–139 (KDQ) is interaction with tRNA. Cysteine 187 functions as the Cysteine persulfide intermediate in the catalytic mechanism. Residues 292–293 (RY) are interaction with tRNA.

This sequence belongs to the MnmA/TRMU family.

The protein resides in the cytoplasm. It carries out the reaction S-sulfanyl-L-cysteinyl-[protein] + uridine(34) in tRNA + AH2 + ATP = 2-thiouridine(34) in tRNA + L-cysteinyl-[protein] + A + AMP + diphosphate + H(+). Functionally, catalyzes the 2-thiolation of uridine at the wobble position (U34) of tRNA, leading to the formation of s(2)U34. This chain is tRNA-specific 2-thiouridylase MnmA, found in Nitratidesulfovibrio vulgaris (strain DP4) (Desulfovibrio vulgaris).